Here is a 37-residue protein sequence, read N- to C-terminus: DTASDAAAAAALTAABAAAAAKLTABBAAAAAAATAA.

This sequence belongs to the type-I AFP family.

In terms of biological role, contributes to protect fish blood from freezing at subzero sea water temperatures. Lowers the blood freezing point. Binds to nascent ice crystals and prevents further growth. The sequence is that of Ice-structuring protein 3 from Pseudopleuronectes americanus (Winter flounder).